Reading from the N-terminus, the 156-residue chain is Endogenous retrovirus group K member 25 Pro protein (156 aa).

The Peptidase A2 domain maps to 21-96; that stretch reads FEGLVDTGAD…IPLNLWGRDL (76 aa). Asp26 is an active-site residue. The G-patch domain occupies 111 to 156; the sequence is YSPTSQKIMTKMGYIPGKGLGKNEDGIKIPVEAKINQKREGIGYPF.

It belongs to the peptidase A2 family. HERV class-II K(HML-2) subfamily. In terms of assembly, active as a homodimer. Autoproteolytically processed at the N-terminus. Expected C-terminal autoprocessing not detected. The sequence shown is that of the processed Pro protein.

It carries out the reaction Processing at the authentic HIV-1 PR recognition site and release of the mature p17 matrix and the p24 capsid protein, as a result of the cleavage of the -SQNY-|-PIVQ- cleavage site.. Its function is as follows. Retroviral proteases have roles in processing of the primary translation products and the maturation of the viral particle. Endogenous Pro proteins may have kept, lost or modified their original function during evolution. This endogenous protein has retained most of the characteristics of retroviral proteases. This chain is Endogenous retrovirus group K member 25 Pro protein (ERVK-25), found in Homo sapiens (Human).